The primary structure comprises 150 residues: Cytochrome c oxidase subunit 5A, mitochondrial (150 aa).

A mitochondrion-targeting transit peptide spans 1-41 (MLGAALRRCAVAATTWAGPRGHLHSARTPGPAAAIQSVRCY). Residues 2–17 (LGAALRRCAVAATTWA) carry the SIFI-degron motif. N6-acetyllysine occurs at positions 87 and 113. Thr-141 is modified (phosphothreonine).

This sequence belongs to the cytochrome c oxidase subunit 5A family. In terms of assembly, component of the cytochrome c oxidase (complex IV, CIV), a multisubunit enzyme composed of 14 subunits. The complex is composed of a catalytic core of 3 subunits MT-CO1, MT-CO2 and MT-CO3, encoded in the mitochondrial DNA, and 11 supernumerary subunits COX4I, COX5A, COX5B, COX6A, COX6B, COX6C, COX7A, COX7B, COX7C, COX8 and NDUFA4, which are encoded in the nuclear genome. The complex exists as a monomer or a dimer and forms supercomplexes (SCs) in the inner mitochondrial membrane with NADH-ubiquinone oxidoreductase (complex I, CI) and ubiquinol-cytochrome c oxidoreductase (cytochrome b-c1 complex, complex III, CIII), resulting in different assemblies (supercomplex SCI(1)III(2)IV(1) and megacomplex MCI(2)III(2)IV(2)). Interacts with AFG1L. Interacts with RAB5IF. Post-translationally, in response to mitochondrial stress, the precursor protein is ubiquitinated by the SIFI complex in the cytoplasm before mitochondrial import, leading to its degradation. Within the SIFI complex, UBR4 initiates ubiquitin chain that are further elongated or branched by KCMF1.

The protein resides in the mitochondrion inner membrane. The protein operates within energy metabolism; oxidative phosphorylation. In terms of biological role, component of the cytochrome c oxidase, the last enzyme in the mitochondrial electron transport chain which drives oxidative phosphorylation. The respiratory chain contains 3 multisubunit complexes succinate dehydrogenase (complex II, CII), ubiquinol-cytochrome c oxidoreductase (cytochrome b-c1 complex, complex III, CIII) and cytochrome c oxidase (complex IV, CIV), that cooperate to transfer electrons derived from NADH and succinate to molecular oxygen, creating an electrochemical gradient over the inner membrane that drives transmembrane transport and the ATP synthase. Cytochrome c oxidase is the component of the respiratory chain that catalyzes the reduction of oxygen to water. Electrons originating from reduced cytochrome c in the intermembrane space (IMS) are transferred via the dinuclear copper A center (CU(A)) of subunit 2 and heme A of subunit 1 to the active site in subunit 1, a binuclear center (BNC) formed by heme A3 and copper B (CU(B)). The BNC reduces molecular oxygen to 2 water molecules using 4 electrons from cytochrome c in the IMS and 4 protons from the mitochondrial matrix. The chain is Cytochrome c oxidase subunit 5A, mitochondrial (COX5A) from Symphalangus syndactylus (Siamang).